The following is a 664-amino-acid chain: Methionine--tRNA ligase (664 aa).

The 'HIGH' region signature appears at 13 to 23 (PYTNGPCHIGH). Residues cysteine 144, cysteine 147, cysteine 156, and cysteine 160 each contribute to the Zn(2+) site. The 'KMSKS' region motif lies at 327-331 (KFSKS). Lysine 330 provides a ligand contact to ATP. In terms of domain architecture, tRNA-binding spans 566–664 (EFGNLDIRIA…RPVKPGTKIR (99 aa)).

It belongs to the class-I aminoacyl-tRNA synthetase family. MetG type 1 subfamily. In terms of assembly, homodimer. Zn(2+) is required as a cofactor.

It is found in the cytoplasm. It carries out the reaction tRNA(Met) + L-methionine + ATP = L-methionyl-tRNA(Met) + AMP + diphosphate. Functionally, is required not only for elongation of protein synthesis but also for the initiation of all mRNA translation through initiator tRNA(fMet) aminoacylation. The chain is Methionine--tRNA ligase from Methanoculleus marisnigri (strain ATCC 35101 / DSM 1498 / JR1).